Here is a 420-residue protein sequence, read N- to C-terminus: MDVLSVSEINAQIKALLEATFLQVRVQGEVSNLTIHKVSGHAYFSLKDSQSVIRCVLFKGNANRLKFALKEGQEVVVFGGISAYVPRGDYQINCFEIEPKNIGSLTLALEQLKEKLRLKGYFDKANKLPKPHFPKRVAVITSQNSAAWADMKKIASKRWPMCELVCINALMQGEGCVQSVVESIAYADSFHGTKNAFDAIVVARGGGSMEDLYPFNDEKIADALHLAKTFSMSAIGHESDFLLSDLVADLRASTPSNAMEILLPSSDEWLQRLDGFNLKLHRSFKILLHQKKAHLEHLEASLKRLSFENKHHLNALKLEKLKIALENKTLEFLRFKKTLLEKISTQTLTSPFLQTKTERLNRLENALKLAHANLKLPQFGAFVSKNNQAIELEALKRGDKIELSNEKARASAEILSVDRV.

It belongs to the XseA family. Heterooligomer composed of large and small subunits.

It is found in the cytoplasm. It catalyses the reaction Exonucleolytic cleavage in either 5'- to 3'- or 3'- to 5'-direction to yield nucleoside 5'-phosphates.. In terms of biological role, bidirectionally degrades single-stranded DNA into large acid-insoluble oligonucleotides, which are then degraded further into small acid-soluble oligonucleotides. This chain is Exodeoxyribonuclease 7 large subunit, found in Helicobacter pylori (strain Shi470).